An 85-amino-acid polypeptide reads, in one-letter code: MKVTLIAILTCAAVLVLHTTAAEELEAESQLMEVGMPDTELAAVDEERLFECSVSCEIEKEGNKDCKKKKCIGGWKCKFNMCVKV.

Positions 1–22 (MKVTLIAILTCAAVLVLHTTAA) are cleaved as a signal peptide. A propeptide spanning residues 23 to 48 (EELEAESQLMEVGMPDTELAAVDEER) is cleaved from the precursor. Disulfide bonds link Cys52–Cys66, Cys56–Cys77, and Cys71–Cys82.

This sequence belongs to the neurotoxin 12 (Hwtx-2) family. 02 (Hwtx-2) subfamily. In terms of tissue distribution, expressed by the venom gland.

The protein resides in the secreted. Functionally, postsynaptic neurotoxin. The protein is U4-theraphotoxin-Hhn1h of Cyriopagopus hainanus (Chinese bird spider).